The primary structure comprises 332 residues: L-lactate dehydrogenase A chain (332 aa).

Alanine 2 is subject to N-acetylalanine. Lysine 5 is subject to N6-acetyllysine; alternate. Lysine 5 carries the N6-succinyllysine; alternate modification. Residue lysine 14 is modified to N6-acetyllysine. The residue at position 18 (threonine 18) is a Phosphothreonine. 29–57 (GAVGMACAISILMKDLADELALVDVIEDK) contacts NAD(+). At lysine 57 the chain carries N6-acetyllysine; alternate. Residue lysine 57 forms a Glycyl lysine isopeptide (Lys-Gly) (interchain with G-Cter in SUMO2); alternate linkage. Lysine 81 carries the N6-acetyllysine modification. NAD(+) is bound at residue arginine 99. Arginine 106 lines the substrate pocket. Lysine 118 carries the N6-acetyllysine; alternate modification. An N6-succinyllysine; alternate modification is found at lysine 118. N6-acetyllysine is present on lysine 126. Positions 138 and 169 each coordinate substrate. Histidine 193 (proton acceptor) is an active-site residue. Lysine 224 and lysine 232 each carry N6-acetyllysine. Tyrosine 239 carries the post-translational modification Phosphotyrosine. An N6-acetyllysine modification is found at lysine 243. Threonine 248 provides a ligand contact to substrate. Threonine 309 is modified (phosphothreonine). Serine 310 carries the phosphoserine modification. Lysine 318 bears the N6-acetyllysine; alternate mark. Lysine 318 bears the N6-succinyllysine; alternate mark. Position 322 is a phosphothreonine (threonine 322).

This sequence belongs to the LDH/MDH superfamily. LDH family. Homotetramer. Interacts with PTEN upstream reading frame protein MP31. ISGylated.

The protein localises to the cytoplasm. The enzyme catalyses (S)-lactate + NAD(+) = pyruvate + NADH + H(+). It functions in the pathway fermentation; pyruvate fermentation to lactate; (S)-lactate from pyruvate: step 1/1. In terms of biological role, interconverts simultaneously and stereospecifically pyruvate and lactate with concomitant interconversion of NADH and NAD(+). In Pongo abelii (Sumatran orangutan), this protein is L-lactate dehydrogenase A chain (LDHA).